A 178-amino-acid polypeptide reads, in one-letter code: Transcription factor E (178 aa).

Residues 3 to 86 form the HTH TFE/IIEalpha-type domain; sequence AHEALAEIAG…YWRITDEPIQ (84 aa).

The protein belongs to the TFE family. Monomer. Interaction with RNA polymerase subunits RpoF and RpoE is necessary for Tfe stimulatory transcription activity. Able to interact with Tbp and RNA polymerase in the absence of DNA promoter. Interacts both with the preinitiation and elongation complexes.

In terms of biological role, transcription factor that plays a role in the activation of archaeal genes transcribed by RNA polymerase. Facilitates transcription initiation by enhancing TATA-box recognition by TATA-box-binding protein (Tbp), and transcription factor B (Tfb) and RNA polymerase recruitment. Not absolutely required for transcription in vitro, but particularly important in cases where Tbp or Tfb function is not optimal. It dynamically alters the nucleic acid-binding properties of RNA polymerases by stabilizing the initiation complex and destabilizing elongation complexes. Seems to translocate with the RNA polymerase following initiation and acts by binding to the non template strand of the transcription bubble in elongation complexes. The polypeptide is Transcription factor E (Thermofilum pendens (strain DSM 2475 / Hrk 5)).